A 196-amino-acid chain; its full sequence is Small ribosomal subunit protein uS4c (196 aa).

The segment at 16 to 40 (GALPGLTRKTPKSGSNLKKKFHSGK) is disordered. The 64-residue stretch at 89-152 (MRLDNTLFRL…RSKDLVRNSI (64 aa)) folds into the S4 RNA-binding domain.

The protein belongs to the universal ribosomal protein uS4 family. In terms of assembly, part of the 30S ribosomal subunit. Contacts protein S5. The interaction surface between S4 and S5 is involved in control of translational fidelity.

It is found in the plastid. The protein resides in the chloroplast. Its function is as follows. One of the primary rRNA binding proteins, it binds directly to 16S rRNA where it nucleates assembly of the body of the 30S subunit. Functionally, with S5 and S12 plays an important role in translational accuracy. The sequence is that of Small ribosomal subunit protein uS4c (rps4) from Anthoxanthum odoratum (Sweet vernal grass).